A 186-amino-acid polypeptide reads, in one-letter code: Adenine phosphoribosyltransferase (186 aa).

Belongs to the purine/pyrimidine phosphoribosyltransferase family. Homodimer.

Its subcellular location is the cytoplasm. The catalysed reaction is AMP + diphosphate = 5-phospho-alpha-D-ribose 1-diphosphate + adenine. It functions in the pathway purine metabolism; AMP biosynthesis via salvage pathway; AMP from adenine: step 1/1. Catalyzes a salvage reaction resulting in the formation of AMP, that is energically less costly than de novo synthesis. The chain is Adenine phosphoribosyltransferase from Sulfurovum sp. (strain NBC37-1).